Reading from the N-terminus, the 130-residue chain is UPF0713 protein YngL (130 aa).

3 consecutive transmembrane segments (helical) span residues Leu4–Phe25, Met62–Leu84, and Ile89–Gly111.

This sequence belongs to the UPF0713 family.

The protein resides in the cell membrane. This chain is UPF0713 protein YngL (yngL), found in Bacillus subtilis (strain 168).